We begin with the raw amino-acid sequence, 88 residues long: UPF0147 protein Ta0600 (88 aa).

The protein belongs to the UPF0147 family.

The sequence is that of UPF0147 protein Ta0600 from Thermoplasma acidophilum (strain ATCC 25905 / DSM 1728 / JCM 9062 / NBRC 15155 / AMRC-C165).